Here is a 249-residue protein sequence, read N- to C-terminus: DNA polymerase sliding clamp 1 (249 aa).

The protein belongs to the PCNA family. Homotrimer. The subunits circularize to form a toroid; DNA passes through its center. Replication factor C (RFC) is required to load the toroid on the DNA.

Sliding clamp subunit that acts as a moving platform for DNA processing. Responsible for tethering the catalytic subunit of DNA polymerase and other proteins to DNA during high-speed replication. The sequence is that of DNA polymerase sliding clamp 1 from Pyrobaculum aerophilum (strain ATCC 51768 / DSM 7523 / JCM 9630 / CIP 104966 / NBRC 100827 / IM2).